A 187-amino-acid polypeptide reads, in one-letter code: Peptidyl-tRNA hydrolase (187 aa).

Tyr14 serves as a coordination point for tRNA. The active-site Proton acceptor is His19. TRNA contacts are provided by Tyr63 and Asn65.

Belongs to the PTH family. As to quaternary structure, monomer.

The protein resides in the cytoplasm. The enzyme catalyses an N-acyl-L-alpha-aminoacyl-tRNA + H2O = an N-acyl-L-amino acid + a tRNA + H(+). In terms of biological role, hydrolyzes ribosome-free peptidyl-tRNAs (with 1 or more amino acids incorporated), which drop off the ribosome during protein synthesis, or as a result of ribosome stalling. Catalyzes the release of premature peptidyl moieties from peptidyl-tRNA molecules trapped in stalled 50S ribosomal subunits, and thus maintains levels of free tRNAs and 50S ribosomes. The polypeptide is Peptidyl-tRNA hydrolase (Thermodesulfovibrio yellowstonii (strain ATCC 51303 / DSM 11347 / YP87)).